A 402-amino-acid chain; its full sequence is S-adenosylmethionine synthase (402 aa).

His-17 is a binding site for ATP. Asp-19 contacts Mg(2+). Glu-45 is a binding site for K(+). 2 residues coordinate L-methionine: Glu-58 and Gln-101. Residues 101 to 111 (QSSDIADGVNE) form a flexible loop region. ATP contacts are provided by residues 177–179 (DAK), 244–245 (RF), Asp-253, 259–260 (RK), Ala-276, and Lys-280. Residue Asp-253 participates in L-methionine binding. Residue Lys-284 participates in L-methionine binding.

Belongs to the AdoMet synthase family. As to quaternary structure, homotetramer; dimer of dimers. The cofactor is Mg(2+). K(+) serves as cofactor.

It localises to the cytoplasm. The catalysed reaction is L-methionine + ATP + H2O = S-adenosyl-L-methionine + phosphate + diphosphate. It participates in amino-acid biosynthesis; S-adenosyl-L-methionine biosynthesis; S-adenosyl-L-methionine from L-methionine: step 1/1. Functionally, catalyzes the formation of S-adenosylmethionine (AdoMet) from methionine and ATP. The overall synthetic reaction is composed of two sequential steps, AdoMet formation and the subsequent tripolyphosphate hydrolysis which occurs prior to release of AdoMet from the enzyme. In Lactobacillus johnsonii (strain CNCM I-12250 / La1 / NCC 533), this protein is S-adenosylmethionine synthase.